The chain runs to 959 residues: ATP-dependent 6-phosphofructokinase subunit beta (959 aa).

An N-terminal catalytic PFK domain 1 region spans residues 2–573 (TVTTPFVNGT…HLNNFMAINS (572 aa)). The interval 144–167 (KNAVSTKPTPPPAPEASAESGLSS) is disordered. Thr-152 bears the Phosphothreonine mark. A compositionally biased stretch (low complexity) spans 158–167 (EASAESGLSS). Phosphoserine occurs at positions 163 and 171. ATP contacts are provided by residues Gly-206, 270–271 (RC), and 300–303 (GDGS). Asp-301 contacts Mg(2+). Beta-D-fructose 6-phosphate is bound by residues 346-348 (SID), Arg-383, 390-392 (MGR), Glu-447, Arg-475, and 481-484 (HVQR). Asp-348 serves as the catalytic Proton acceptor. Residues 574-587 (ADHNEPKLPKDKRL) form an interdomain linker region. A C-terminal regulatory PFK domain 2 region spans residues 588 to 959 (KIAIVNVGAP…DHLVGRKRVD (372 aa)). Beta-D-fructose 2,6-bisphosphate contacts are provided by residues Arg-658, 716-720 (TLSNN), Arg-754, and 761-763 (QGG). A Phosphoserine modification is found at Ser-803. Beta-D-fructose 2,6-bisphosphate is bound by residues Lys-847, 853–856 (HVQQ), and Arg-935.

The protein belongs to the phosphofructokinase type A (PFKA) family. ATP-dependent PFK group I subfamily. Eukaryotic two domain clade 'E' sub-subfamily. As to quaternary structure, heterooctamer of 4 alpha and 4 beta chains. Mg(2+) serves as cofactor.

It localises to the cytoplasm. It is found in the mitochondrion outer membrane. The enzyme catalyses beta-D-fructose 6-phosphate + ATP = beta-D-fructose 1,6-bisphosphate + ADP + H(+). It functions in the pathway carbohydrate degradation; glycolysis; D-glyceraldehyde 3-phosphate and glycerone phosphate from D-glucose: step 3/4. Its activity is regulated as follows. Allosterically activated by ADP, AMP, or fructose 2,6-bisphosphate, and allosterically inhibited by ATP or citrate. Catalyzes the phosphorylation of D-fructose 6-phosphate to fructose 1,6-bisphosphate by ATP, the first committing step of glycolysis. The chain is ATP-dependent 6-phosphofructokinase subunit beta (PFK2) from Saccharomyces cerevisiae (strain ATCC 204508 / S288c) (Baker's yeast).